Here is a 541-residue protein sequence, read N- to C-terminus: Chaperonin GroEL 1 (541 aa).

ATP-binding positions include 29–32 (TLGP), 86–90 (DGTTT), G413, 477–479 (NAA), and D493.

Belongs to the chaperonin (HSP60) family. Forms a cylinder of 14 subunits composed of two heptameric rings stacked back-to-back. Interacts with the co-chaperonin GroES.

It is found in the cytoplasm. It catalyses the reaction ATP + H2O + a folded polypeptide = ADP + phosphate + an unfolded polypeptide.. In terms of biological role, together with its co-chaperonin GroES, plays an essential role in assisting protein folding. The GroEL-GroES system forms a nano-cage that allows encapsulation of the non-native substrate proteins and provides a physical environment optimized to promote and accelerate protein folding. The protein is Chaperonin GroEL 1 of Paenarthrobacter aurescens (strain TC1).